Consider the following 80-residue polypeptide: MKKDIHPEYRPVVFMDTSTGYQFLSGSTKTSKETVEFEGETYPLIRVEISSDSHPFYTGRQKFTQADGRVDRFNKKYGLK.

It belongs to the bacterial ribosomal protein bL31 family. Type B subfamily. In terms of assembly, part of the 50S ribosomal subunit.

The chain is Large ribosomal subunit protein bL31B from Streptococcus mutans serotype c (strain ATCC 700610 / UA159).